Reading from the N-terminus, the 281-residue chain is Small ribosomal subunit protein uS2 (281 aa).

This sequence belongs to the universal ribosomal protein uS2 family.

This chain is Small ribosomal subunit protein uS2 (rpsB), found in Chlamydia muridarum (strain MoPn / Nigg).